A 137-amino-acid chain; its full sequence is Probable histone H2AXa (137 aa).

The span at 1–10 (MSSSQGGGGR) shows a compositional bias: gly residues. The interval 1–21 (MSSSQGGGGRGKAKTTKAVSR) is disordered. S134 is modified (phosphoserine; by ATM and ATR). Residues 134–135 (SQ) carry the [ST]-Q motif motif.

This sequence belongs to the histone H2A family. As to quaternary structure, the nucleosome is a histone octamer containing two molecules each of H2A, H2B, H3 and H4 assembled in one H3-H4 heterotetramer and two H2A-H2B heterodimers. The octamer wraps approximately 147 bp of DNA. Interacts with numerous proteins required for DNA damage signaling and repair when phosphorylated on Ser-134. In terms of processing, phosphorylated to form H2AXS139ph (gamma-H2AX) in response to DNA double strand breaks (DSBs) generated by exogenous genotoxic agents and by stalled replication forks, and may also occur during meiotic recombination events. Phosphorylation can extend up to several thousand nucleosomes from the actual site of the DSB and may mark the surrounding chromatin for recruitment of proteins required for DNA damage signaling and repair. Widespread phosphorylation may also serve to amplify the damage signal or aid repair of persistent lesions. H2AXS139ph in response to ionizing radiation is mediated by ATM while defects in DNA replication induce H2AXS139ph subsequent to activation of ATR. Dephosphorylation of H2AXS139ph by PP2A is required for DNA DSB repair.

The protein resides in the nucleus. It localises to the chromosome. Functionally, variant histone H2A which replaces conventional H2A in a subset of nucleosomes. Nucleosomes wrap and compact DNA into chromatin, limiting DNA accessibility to the cellular machineries which require DNA as a template. Histones thereby play a central role in transcription regulation, DNA repair, DNA replication and chromosomal stability. DNA accessibility is regulated via a complex set of post-translational modifications of histones, also called histone code, and nucleosome remodeling. Required for checkpoint-mediated arrest of cell cycle progression in response to low doses of ionizing radiation and for efficient repair of DNA double strand breaks (DSBs) specifically when modified by C-terminal phosphorylation. The sequence is that of Probable histone H2AXa from Oryza sativa subsp. indica (Rice).